The primary structure comprises 199 residues: MLLPYMETGRIEAGCDEAGRGCLAGAVFAAAVILPEDFKNEDLNDSKQLSEKKRYKLRPVIEREAIAWAVGIVSPEEIDKINILKASFLAMHRAIEQLKVRPEHLLIDGNRFTPYPDIPHTTVVKGDGKYLSIAAASILAKTYRDDYMNELALEYPAYHWLDNKGYPTKVHREAIRTHGITPYHRKTFTLLPEQLTLGF.

The 190-residue stretch at 10–199 (RIEAGCDEAG…LLPEQLTLGF (190 aa)) folds into the RNase H type-2 domain. Residues D16, E17, and D108 each coordinate a divalent metal cation.

The protein belongs to the RNase HII family. It depends on Mn(2+) as a cofactor. Mg(2+) serves as cofactor.

The protein localises to the cytoplasm. It catalyses the reaction Endonucleolytic cleavage to 5'-phosphomonoester.. Endonuclease that specifically degrades the RNA of RNA-DNA hybrids. This chain is Ribonuclease HII, found in Parabacteroides distasonis (strain ATCC 8503 / DSM 20701 / CIP 104284 / JCM 5825 / NCTC 11152).